A 487-amino-acid polypeptide reads, in one-letter code: Putative B3 domain-containing protein At1g78640 (487 aa).

2 DNA-binding regions (TF-B3) span residues 171–269 and 379–474; these read RLLL…QQGT and RLTL…LFRV.

Its subcellular location is the nucleus. In Arabidopsis thaliana (Mouse-ear cress), this protein is Putative B3 domain-containing protein At1g78640.